The following is a 475-amino-acid chain: E3 ubiquitin-protein ligase TRIM62 (475 aa).

An RING-type zinc finger spans residues 11–54 (CSICLSIYQDPVSLGCEHYFCRRCITEHWVRQEAQGARDCPECR). The B box-type zinc finger occupies 88 to 128 (RAARPCQAHDKVKLFCLTDRALLCFFCDEPALHEQHQVTGI). Zn(2+) is bound by residues Cys-93, His-96, Cys-114, and His-120. The stretch at 121 to 241 (EQHQVTGIDD…LQERLAETDR (121 aa)) forms a coiled coil. A B30.2/SPRY domain is found at 277–475 (PLQYTIWKSL…QPLRINTVRI (199 aa)).

It belongs to the TRIM/RBCC family. In terms of assembly, interacts with the ubiquitin-conjugating enzyme, UBE2D2. Post-translationally, polyubiquitinated, autoubiquitinated in the presence of UBE2D2.

It localises to the cytoplasm. It carries out the reaction S-ubiquitinyl-[E2 ubiquitin-conjugating enzyme]-L-cysteine + [acceptor protein]-L-lysine = [E2 ubiquitin-conjugating enzyme]-L-cysteine + N(6)-ubiquitinyl-[acceptor protein]-L-lysine.. It functions in the pathway protein modification; protein ubiquitination. E3 ubiquitin ligase that plays a role in antifungal immunity by mediating 'Lys-27'-linked ubiquitination of CARD9 downstream of C-type lectin receptors; leading to CARD9 activation, followed by activation of NF-kappa-B and MAP kinase p38 pathways. E3 ubiquitin ligase activity is dependent on E2 ubiquitin-conjugating enzyme UBE2D2. The protein is E3 ubiquitin-protein ligase TRIM62 of Mus musculus (Mouse).